A 142-amino-acid chain; its full sequence is ATP synthase epsilon chain (142 aa).

This sequence belongs to the ATPase epsilon chain family. F-type ATPases have 2 components, CF(1) - the catalytic core - and CF(0) - the membrane proton channel. CF(1) has five subunits: alpha(3), beta(3), gamma(1), delta(1), epsilon(1). CF(0) has three main subunits: a, b and c.

The protein resides in the cell inner membrane. Produces ATP from ADP in the presence of a proton gradient across the membrane. The sequence is that of ATP synthase epsilon chain from Shewanella sp. (strain ANA-3).